The sequence spans 329 residues: 4-hydroxythreonine-4-phosphate dehydrogenase (329 aa).

Positions 136 and 137 each coordinate substrate. Positions 166, 211, and 266 each coordinate a divalent metal cation. The substrate site is built by K274, N283, and R292.

Belongs to the PdxA family. As to quaternary structure, homodimer. Requires Zn(2+) as cofactor. Mg(2+) is required as a cofactor. Co(2+) serves as cofactor.

It is found in the cytoplasm. It carries out the reaction 4-(phosphooxy)-L-threonine + NAD(+) = 3-amino-2-oxopropyl phosphate + CO2 + NADH. It participates in cofactor biosynthesis; pyridoxine 5'-phosphate biosynthesis; pyridoxine 5'-phosphate from D-erythrose 4-phosphate: step 4/5. Functionally, catalyzes the NAD(P)-dependent oxidation of 4-(phosphooxy)-L-threonine (HTP) into 2-amino-3-oxo-4-(phosphooxy)butyric acid which spontaneously decarboxylates to form 3-amino-2-oxopropyl phosphate (AHAP). The protein is 4-hydroxythreonine-4-phosphate dehydrogenase of Shigella dysenteriae serotype 1 (strain Sd197).